Consider the following 453-residue polypeptide: ATP-dependent RNA helicase dbp8 (453 aa).

Residues 7–35 (KSFSDLGISPWLIDTLKALAIYEPTDIQE) carry the Q motif motif. The region spanning 38–214 (IAQILEGRNC…YQPQKNNKPP (177 aa)) is the Helicase ATP-binding domain. Residue 51 to 58 (AKTGSGKT) coordinates ATP. A DEAD box motif is present at residues 160–163 (DEAD). In terms of domain architecture, Helicase C-terminal spans 230 to 393 (TLQQSYIFVS…YEHVSENKML (164 aa)). Residues 413–453 (RGFGERRQKRNEKRLMANGISNKLKNSGRKKKAKNTLSTEK) are disordered.

It belongs to the DEAD box helicase family. DDX49/DBP8 subfamily.

It localises to the nucleus. Its subcellular location is the nucleolus. The enzyme catalyses ATP + H2O = ADP + phosphate + H(+). ATP-binding RNA helicase involved in 40S ribosomal subunit biogenesis and is required for the normal formation of 18S rRNAs through pre-rRNA processing at A0, A1 and A2 sites. Required for vegetative growth. The sequence is that of ATP-dependent RNA helicase dbp8 (dbp8) from Schizosaccharomyces pombe (strain 972 / ATCC 24843) (Fission yeast).